The chain runs to 313 residues: Protoheme IX farnesyltransferase (313 aa).

A run of 9 helical transmembrane segments spans residues 33 to 53, 59 to 79, 107 to 127, 129 to 149, 162 to 182, 188 to 208, 212 to 232, 252 to 272, and 292 to 312; these read IALM…PVML, MPSW…AGSA, VEPA…TLMF, LLVN…YVFV, IVIG…AVTG, AVLL…ALAI, DDYA…EVVT, VADI…WFVA, and LFHM…AAAL.

It belongs to the UbiA prenyltransferase family. Protoheme IX farnesyltransferase subfamily.

The protein resides in the cell membrane. The catalysed reaction is heme b + (2E,6E)-farnesyl diphosphate + H2O = Fe(II)-heme o + diphosphate. It participates in porphyrin-containing compound metabolism; heme O biosynthesis; heme O from protoheme: step 1/1. Its function is as follows. Converts heme B (protoheme IX) to heme O by substitution of the vinyl group on carbon 2 of heme B porphyrin ring with a hydroxyethyl farnesyl side group. The chain is Protoheme IX farnesyltransferase from Parafrankia sp. (strain EAN1pec).